Here is a 159-residue protein sequence, read N- to C-terminus: Biogenesis of lysosome-related organelles complex 1 subunit 2 (159 aa).

The interval 1–37 (MDKPTTSAAAAAAQDSNLLPDSPQHGPTLSSASSFEA) is disordered. The segment covering 14–36 (QDSNLLPDSPQHGPTLSSASSFE) has biased composition (polar residues). Positions 69–134 (EDYKLLEEMN…KLEAAAYKLD (66 aa)) form a coiled coil.

This sequence belongs to the BLOC1S2 family. Homodimer. Component of the biogenesis of lysosome-related organelles complex-1 (BLOC-1) composed of Blos1, Blos2, Blos3, Blos4, Dysb, Muted, Pldn and Snapin. Interacts with Snapin.

Functionally, component of the biogenesis of lysosome-related organelles complex-1 (BLOC-1) involved in pigment granule biogenesis. This Drosophila melanogaster (Fruit fly) protein is Biogenesis of lysosome-related organelles complex 1 subunit 2.